Here is a 154-residue protein sequence, read N- to C-terminus: 6,7-dimethyl-8-ribityllumazine synthase (154 aa).

5-amino-6-(D-ribitylamino)uracil contacts are provided by residues Phe22, 56-58 (AFE), and 80-82 (AVI). 85–86 (AT) contacts (2S)-2-hydroxy-3-oxobutyl phosphate. His88 (proton donor) is an active-site residue. Phe113 lines the 5-amino-6-(D-ribitylamino)uracil pocket. Arg127 contributes to the (2S)-2-hydroxy-3-oxobutyl phosphate binding site.

The protein belongs to the DMRL synthase family.

The enzyme catalyses (2S)-2-hydroxy-3-oxobutyl phosphate + 5-amino-6-(D-ribitylamino)uracil = 6,7-dimethyl-8-(1-D-ribityl)lumazine + phosphate + 2 H2O + H(+). It functions in the pathway cofactor biosynthesis; riboflavin biosynthesis; riboflavin from 2-hydroxy-3-oxobutyl phosphate and 5-amino-6-(D-ribitylamino)uracil: step 1/2. Catalyzes the formation of 6,7-dimethyl-8-ribityllumazine by condensation of 5-amino-6-(D-ribitylamino)uracil with 3,4-dihydroxy-2-butanone 4-phosphate. This is the penultimate step in the biosynthesis of riboflavin. The chain is 6,7-dimethyl-8-ribityllumazine synthase from Syntrophobacter fumaroxidans (strain DSM 10017 / MPOB).